We begin with the raw amino-acid sequence, 214 residues long: Corrinoid adenosyltransferase (214 aa).

50–56 (GKGKGKS) contacts ATP.

The protein belongs to the Cob(I)alamin adenosyltransferase family. Monomer. The cofactor is Mn(2+).

It localises to the cytoplasm. It carries out the reaction 2 cob(II)yrinate a,c diamide + reduced [electron-transfer flavoprotein] + 2 ATP = 2 adenosylcob(III)yrinate a,c-diamide + 2 triphosphate + oxidized [electron-transfer flavoprotein] + 3 H(+). The enzyme catalyses 2 cob(II)alamin + reduced [electron-transfer flavoprotein] + 2 ATP = 2 adenosylcob(III)alamin + 2 triphosphate + oxidized [electron-transfer flavoprotein] + 3 H(+). Its pathway is cofactor biosynthesis; adenosylcobalamin biosynthesis; adenosylcobalamin from cob(II)yrinate a,c-diamide: step 2/7. Its function is as follows. Required for both de novo synthesis of the corrin ring for the assimilation of exogenous corrinoids. Participates in the adenosylation of a variety of incomplete and complete corrinoids. This chain is Corrinoid adenosyltransferase (cobO), found in Sinorhizobium sp.